Reading from the N-terminus, the 915-residue chain is Translation initiation factor IF-2 (915 aa).

Positions 83–94 are enriched in basic and acidic residues; sequence QSRRAVEKEQIL. Disordered regions lie at residues 83–177, 216–280, and 293–328; these read QSRR…PEPP, EADR…KPAV, and ISGM…LLRE. Composition is skewed to low complexity over residues 111 to 129 and 137 to 164; these read VRAA…EAPS and APAT…LSAP. A compositionally biased stretch (pro residues) spans 165–177; it reads LPEPVPEPVPEPP. A compositionally biased stretch (polar residues) spans 293–305; the sequence is ISGMDDSSGTGSR. The segment covering 314 to 328 has biased composition (basic and acidic residues); that stretch reads MEREREQEEADLLRE. Residues 412–582 enclose the tr-type G domain; it reads TRPPVVTIMG…LTEAEMRELK (171 aa). Residues 421-428 form a G1 region; sequence GHVDHGKT. 421–428 provides a ligand contact to GTP; sequence GHVDHGKT. Residues 446–450 are G2; the sequence is GITQH. The segment at 468 to 471 is G3; it reads DTPG. GTP contacts are provided by residues 468–472 and 522–525; these read DTPGH and NKMD. Positions 522–525 are G4; that stretch reads NKMD. The segment at 558-560 is G5; it reads SAK.

This sequence belongs to the TRAFAC class translation factor GTPase superfamily. Classic translation factor GTPase family. IF-2 subfamily.

It is found in the cytoplasm. In terms of biological role, one of the essential components for the initiation of protein synthesis. Protects formylmethionyl-tRNA from spontaneous hydrolysis and promotes its binding to the 30S ribosomal subunits. Also involved in the hydrolysis of GTP during the formation of the 70S ribosomal complex. The protein is Translation initiation factor IF-2 of Chlorobium luteolum (strain DSM 273 / BCRC 81028 / 2530) (Pelodictyon luteolum).